The chain runs to 248 residues: 2,3-bisphosphoglycerate-dependent phosphoglycerate mutase (248 aa).

Substrate is bound by residues 8–15 (RHGESTWN), 21–22 (TG), Arg60, 87–90 (ERHY), Lys98, 114–115 (RR), and 183–184 (GN). Residue His9 is the Tele-phosphohistidine intermediate of the active site. The active-site Proton donor/acceptor is the Glu87.

Belongs to the phosphoglycerate mutase family. BPG-dependent PGAM subfamily. In terms of assembly, homodimer.

It carries out the reaction (2R)-2-phosphoglycerate = (2R)-3-phosphoglycerate. It functions in the pathway carbohydrate degradation; glycolysis; pyruvate from D-glyceraldehyde 3-phosphate: step 3/5. Catalyzes the interconversion of 2-phosphoglycerate and 3-phosphoglycerate. The protein is 2,3-bisphosphoglycerate-dependent phosphoglycerate mutase of Paraburkholderia phytofirmans (strain DSM 17436 / LMG 22146 / PsJN) (Burkholderia phytofirmans).